We begin with the raw amino-acid sequence, 246 residues long: Virulence plasmid protein pGP6-D (246 aa).

The protein belongs to the UPF0137 (pGP6-D) family.

This is Virulence plasmid protein pGP6-D from Chlamydia psittaci (Chlamydophila psittaci).